The sequence spans 732 residues: DNA-directed RNA polymerase subunit beta' (732 aa).

Residues cysteine 70, cysteine 72, cysteine 85, and cysteine 88 each contribute to the Zn(2+) site. 3 residues coordinate Mg(2+): aspartate 575, aspartate 577, and aspartate 579.

It belongs to the RNA polymerase beta' chain family. RpoC1 subfamily. In terms of assembly, in plastids the minimal PEP RNA polymerase catalytic core is composed of four subunits: alpha, beta, beta', and beta''. When a (nuclear-encoded) sigma factor is associated with the core the holoenzyme is formed, which can initiate transcription. The cofactor is Mg(2+). Requires Zn(2+) as cofactor.

The protein localises to the plastid. It localises to the chloroplast. It carries out the reaction RNA(n) + a ribonucleoside 5'-triphosphate = RNA(n+1) + diphosphate. Its function is as follows. DNA-dependent RNA polymerase catalyzes the transcription of DNA into RNA using the four ribonucleoside triphosphates as substrates. This Thalassiosira pseudonana (Marine diatom) protein is DNA-directed RNA polymerase subunit beta'.